Reading from the N-terminus, the 335-residue chain is Mitochondrial uncoupling protein 4C (335 aa).

Solcar repeat units lie at residues 34 to 125, 137 to 229, and 238 to 329; these read RNLF…FRRP, LKIY…SKRT, and EGLP…LRQW. A run of 6 helical transmembrane segments spans residues 40–57, 100–118, 138–157, 204–223, 244–264, and 304–323; these read YVNTFIGANLAESCVFPL, GFSAMVTRNFIFNSLRVVL, KIYMALGCSFTAGCIAQALA, GVGPSCMRACLMTTGDVGSY, FVSSMCAGLTASVLSTPADVI, and GLMPTWFRLGPFSVLFWLSV.

Belongs to the mitochondrial carrier (TC 2.A.29) family.

The protein localises to the mitochondrion inner membrane. Mitochondrial protein that is likely to be responsible for thermogenic respiration. Likely to function in mitochondrial uncoupling i.e. creating mitochondrial proton leaks across the inner mitochondrial membrane and can therefore dissipate the mitochondrial proton gradient and convert the energy of substrate oxidation into heat instead of ATP. Involved in cold tolerance, it is required for development to the adult stage at low temperatures. The protein is Mitochondrial uncoupling protein 4C of Drosophila melanogaster (Fruit fly).